A 141-amino-acid chain; its full sequence is Hemoglobin subunit alpha-D (141 aa).

In terms of domain architecture, Globin spans 1-141 (VLTAEDKKLI…VAAVLAEKYR (141 aa)). The heme b site is built by His58 and His87.

This sequence belongs to the globin family. Heterotetramer of two alpha-D chains and two beta chains. As to expression, red blood cells.

Functionally, involved in oxygen transport from the lung to the various peripheral tissues. This chain is Hemoglobin subunit alpha-D (HBAD), found in Sturnus vulgaris (Starling).